We begin with the raw amino-acid sequence, 586 residues long: DNA-directed RNA polymerase subunit beta' (586 aa).

Zn(2+) contacts are provided by Cys-64, Cys-66, Cys-85, and Cys-88. Mg(2+)-binding residues include Asp-448, Asp-450, and Asp-452.

The protein belongs to the RNA polymerase beta' chain family. RpoC1 subfamily. As to quaternary structure, in plastids the minimal PEP RNA polymerase catalytic core is composed of four subunits: alpha, beta, beta', and beta''. When a (nuclear-encoded) sigma factor is associated with the core the holoenzyme is formed, which can initiate transcription. Mg(2+) is required as a cofactor. It depends on Zn(2+) as a cofactor.

The protein resides in the plastid. It localises to the chloroplast. It catalyses the reaction RNA(n) + a ribonucleoside 5'-triphosphate = RNA(n+1) + diphosphate. Functionally, DNA-dependent RNA polymerase catalyzes the transcription of DNA into RNA using the four ribonucleoside triphosphates as substrates. This is DNA-directed RNA polymerase subunit beta' from Euglena gracilis.